A 305-amino-acid chain; its full sequence is Porphobilinogen deaminase (305 aa).

An S-(dipyrrolylmethanemethyl)cysteine modification is found at cysteine 239.

It belongs to the HMBS family. Monomer. Requires dipyrromethane as cofactor.

The catalysed reaction is 4 porphobilinogen + H2O = hydroxymethylbilane + 4 NH4(+). It functions in the pathway porphyrin-containing compound metabolism; protoporphyrin-IX biosynthesis; coproporphyrinogen-III from 5-aminolevulinate: step 2/4. Functionally, tetrapolymerization of the monopyrrole PBG into the hydroxymethylbilane pre-uroporphyrinogen in several discrete steps. The polypeptide is Porphobilinogen deaminase (Dichelobacter nodosus (strain VCS1703A)).